Consider the following 289-residue polypeptide: Serine/threonine-protein phosphatase Pgam5, mitochondrial (289 aa).

The helical transmembrane segment at 7 to 23 threads the bilayer; the sequence is FACGTGAGLLTFYLTKL.

Belongs to the phosphoglycerate mutase family. BPG-dependent PGAM subfamily. Interacts with Pk92B/ASK1.

It is found in the mitochondrion outer membrane. It catalyses the reaction O-phospho-L-seryl-[protein] + H2O = L-seryl-[protein] + phosphate. The enzyme catalyses O-phospho-L-threonyl-[protein] + H2O = L-threonyl-[protein] + phosphate. Its function is as follows. Displays phosphatase activity for serine/threonine residues, and dephosphorylates and activates Pk92B kinase. Has apparently no phosphoglycerate mutase activity. This is Serine/threonine-protein phosphatase Pgam5, mitochondrial from Drosophila persimilis (Fruit fly).